A 416-amino-acid polypeptide reads, in one-letter code: Formyl-CoA:oxalate CoA-transferase (416 aa).

Residues 17 to 18, Arg-38, 72 to 75, 96 to 98, His-104, and 137 to 140 each bind CoA; these read QS, LNTK, NFH, and KAYE. Asp-169 (nucleophile) is an active-site residue. 248–250 provides a ligand contact to substrate; it reads GGQ. CoA is bound at residue 273–275; the sequence is QEQ.

It belongs to the CoA-transferase III family. Frc subfamily. Homodimer.

The enzyme catalyses formyl-CoA + oxalate = oxalyl-CoA + formate. It participates in metabolic intermediate degradation; oxalate degradation; CO(2) and formate from oxalate: step 1/2. Involved in the catabolism of oxalate and in the adapatation to low pH via the induction of the oxalate-dependent acid tolerance response (ATR). Catalyzes the transfer of the CoA moiety from formyl-CoA to oxalate. The polypeptide is Formyl-CoA:oxalate CoA-transferase (Shigella sonnei (strain Ss046)).